Reading from the N-terminus, the 301-residue chain is Pantothenate synthetase (301 aa).

Position 30–37 (30–37 (MGNLHEGH)) interacts with ATP. His37 serves as the catalytic Proton donor. Gln61 is a binding site for (R)-pantoate. Gln61 contacts beta-alanine. Residue 149–152 (GEKD) participates in ATP binding. A (R)-pantoate-binding site is contributed by Gln155. ATP-binding positions include Val178 and 186-189 (MSSR).

Belongs to the pantothenate synthetase family. In terms of assembly, homodimer.

It is found in the cytoplasm. The enzyme catalyses (R)-pantoate + beta-alanine + ATP = (R)-pantothenate + AMP + diphosphate + H(+). It participates in cofactor biosynthesis; (R)-pantothenate biosynthesis; (R)-pantothenate from (R)-pantoate and beta-alanine: step 1/1. In terms of biological role, catalyzes the condensation of pantoate with beta-alanine in an ATP-dependent reaction via a pantoyl-adenylate intermediate. The protein is Pantothenate synthetase of Vibrio vulnificus (strain YJ016).